The primary structure comprises 133 residues: Ribonuclease VapC10 (133 aa).

The 118-residue stretch at 2 to 119 folds into the PINc domain; sequence ILVDSDVLIA…NVWHFPMFEQ (118 aa). Aspartate 5 and aspartate 92 together coordinate Mg(2+).

The protein belongs to the PINc/VapC protein family. It depends on Mg(2+) as a cofactor.

In terms of biological role, toxic component of a type II toxin-antitoxin (TA) system. An RNase. The cognate antitoxin is VapB10. The polypeptide is Ribonuclease VapC10 (Mycobacterium tuberculosis (strain CDC 1551 / Oshkosh)).